Here is a 653-residue protein sequence, read N- to C-terminus: Macrolide export ATP-binding/permease protein MacB (653 aa).

In terms of domain architecture, ABC transporter spans 6 to 244 (LQLTRVTRRF…DAAPDASGGA (239 aa)). 42-49 (GASGSGKS) lines the ATP pocket. The next 4 helical transmembrane spans lie at 278-298 (LLTM…VAIG), 526-546 (LTLL…IGVM), 587-607 (MGGA…SLFV), and 616-636 (AASI…FGFM).

It belongs to the ABC transporter superfamily. Macrolide exporter (TC 3.A.1.122) family. As to quaternary structure, homodimer.

It localises to the cell inner membrane. In terms of biological role, non-canonical ABC transporter that contains transmembrane domains (TMD), which form a pore in the inner membrane, and an ATP-binding domain (NBD), which is responsible for energy generation. Confers resistance against macrolides. This chain is Macrolide export ATP-binding/permease protein MacB, found in Burkholderia pseudomallei (strain 1710b).